Here is an 860-residue protein sequence, read N- to C-terminus: Probable leucine--tRNA ligase, cytoplasmic (860 aa).

Residues 41 to 51 carry the 'HIGH' region motif; the sequence is PYMNGKLHLGH. Residues 552–556 carry the 'KMSKS' region motif; that stretch reads KMSKS. Lys-555 is a binding site for ATP.

This sequence belongs to the class-I aminoacyl-tRNA synthetase family.

Its subcellular location is the cytoplasm. It catalyses the reaction tRNA(Leu) + L-leucine + ATP = L-leucyl-tRNA(Leu) + AMP + diphosphate. The polypeptide is Probable leucine--tRNA ligase, cytoplasmic (Enterocytozoon bieneusi (strain H348) (Microsporidian parasite)).